The sequence spans 287 residues: Light-independent protochlorophyllide reductase iron-sulfur ATP-binding protein (287 aa).

ATP is bound by residues Gly10–Thr15 and Lys39. Residue Ser14 coordinates Mg(2+). Residues Cys95 and Cys129 each contribute to the [4Fe-4S] cluster site. An ATP-binding site is contributed by Asn181 to Arg182.

This sequence belongs to the NifH/BchL/ChlL family. As to quaternary structure, homodimer. Protochlorophyllide reductase is composed of three subunits; BchL, BchN and BchB. Requires [4Fe-4S] cluster as cofactor.

The catalysed reaction is chlorophyllide a + oxidized 2[4Fe-4S]-[ferredoxin] + 2 ADP + 2 phosphate = protochlorophyllide a + reduced 2[4Fe-4S]-[ferredoxin] + 2 ATP + 2 H2O. It participates in porphyrin-containing compound metabolism; bacteriochlorophyll biosynthesis (light-independent). In terms of biological role, component of the dark-operative protochlorophyllide reductase (DPOR) that uses Mg-ATP and reduced ferredoxin to reduce ring D of protochlorophyllide (Pchlide) to form chlorophyllide a (Chlide). This reaction is light-independent. The L component serves as a unique electron donor to the NB-component of the complex, and binds Mg-ATP. This chain is Light-independent protochlorophyllide reductase iron-sulfur ATP-binding protein, found in Heliobacterium modesticaldum (strain ATCC 51547 / Ice1).